A 156-amino-acid polypeptide reads, in one-letter code: Small ribosomal subunit protein uS7 (156 aa).

This sequence belongs to the universal ribosomal protein uS7 family. As to quaternary structure, part of the 30S ribosomal subunit. Contacts proteins S9 and S11.

One of the primary rRNA binding proteins, it binds directly to 16S rRNA where it nucleates assembly of the head domain of the 30S subunit. Is located at the subunit interface close to the decoding center, probably blocks exit of the E-site tRNA. The protein is Small ribosomal subunit protein uS7 of Renibacterium salmoninarum (strain ATCC 33209 / DSM 20767 / JCM 11484 / NBRC 15589 / NCIMB 2235).